The following is a 246-amino-acid chain: Thaumatin-like protein 1 (246 aa).

The N-terminal stretch at 1–24 (MMKSQAALLGLTTLAILFFSGAHA) is a signal peptide. Intrachain disulfides connect Cys33–Cys245, Cys81–Cys91, Cys96–Cys103, Cys151–Cys234, Cys156–Cys217, Cys164–Cys180, Cys184–Cys193, and Cys194–Cys204.

It belongs to the thaumatin family. In terms of tissue distribution, equally expressed in the abscission zone and surrounding tissues of both fruitlets and leaves.

It localises to the secreted. In terms of biological role, may be involved in protecting plant tissues from pathogen infection. In Prunus persica (Peach), this protein is Thaumatin-like protein 1.